Here is a 71-residue protein sequence, read N- to C-terminus: Palustrin-2AJ2 (71 aa).

Residues 1 to 22 form the signal peptide; it reads MFTLKKPLLVLLFLGTVSLSLC. Positions 23–40 are excised as a propeptide; it reads EQERAADDDEGEVIEEEV. A disulfide bridge connects residues cysteine 65 and cysteine 71.

Expressed by the skin glands.

It is found in the secreted. Its function is as follows. Displays broad-spectrum antibacterial activity against a range of Gram-positive and Gram-negative bacteria. Has low hemolytic activity, low cytotoxicity and low antioxidant activity. This Amolops jingdongensis (Chinese torrent frog) protein is Palustrin-2AJ2.